The following is a 28-amino-acid chain: VTVVQYRSTNASSGYLNLRVYLLDTGLR.

Its activity is regulated as follows. Inhibited by PMSF. Not or very weakly inhibited by EDTA, EGTA, beta-mercaptoethanol, benzamidine, aprotinin, iodoacetic acid, pepstatin A and SBTI. Its function is as follows. Alkaline thrombin-like serine protease. Has fibrinolytic and fibrinogenolytic but not plasminogenolytic activity. Cleaves fibrinogen chains Aalpha, Bbeta and gamma chains in that order. Cleaves after Arg and Lys residues. The protein is Alkaline serine protease NJP of Hediste japonica (Polychaete worm).